We begin with the raw amino-acid sequence, 337 residues long: MTERRDNVSHAPDAIEGPNDGAHAEDTSPGFFSLENLGVAQVQVVGGTLNGFSIGFVAVYILLYEVATNCSLFKTTEACKAVGSYGCEWKDTEVCSWKKECDSDSDGVNPCESLIGYSSLYSGIFASAMIVGSMVGSIIAGKCITMFGLKKSFIIVGVMSVVASALNHISVATNEFWVLCAGRVLMGIGLGVVCVICPMYVNENAHPKLSKVDGVLFQVFITFGIMLAAMLGLILDKTVNYDNDPDMAGRFHGFCAVSSVLSVAMFLVGMFLRESTATFSQDDDGKADGGMDPNEYGWGQMLWPLFMGAVTAGTLQLTGINAVMNYAPKITENLGMD.

A disordered region spans residues 1–22 (MTERRDNVSHAPDAIEGPNDGA). Topologically, residues 1–43 (MTERRDNVSHAPDAIEGPNDGAHAEDTSPGFFSLENLGVAQVQ) are cytoplasmic. A helical membrane pass occupies residues 44-64 (VVGGTLNGFSIGFVAVYILLY). Residues 65–119 (EVATNCSLFKTTEACKAVGSYGCEWKDTEVCSWKKECDSDSDGVNPCESLIGYSS) lie on the Extracellular side of the membrane. N69 carries an N-linked (GlcNAc...) asparagine glycan. The chain crosses the membrane as a helical span at residues 120–140 (LYSGIFASAMIVGSMVGSIIA). The Cytoplasmic segment spans residues 141–152 (GKCITMFGLKKS). A helical transmembrane segment spans residues 153–173 (FIIVGVMSVVASALNHISVAT). Over 174 to 175 (NE) the chain is Extracellular. Residues 176–196 (FWVLCAGRVLMGIGLGVVCVI) traverse the membrane as a helical segment. At 197–214 (CPMYVNENAHPKLSKVDG) the chain is on the cytoplasmic side. Residues 215-235 (VLFQVFITFGIMLAAMLGLIL) traverse the membrane as a helical segment. The Extracellular segment spans residues 236 to 250 (DKTVNYDNDPDMAGR). Residues 251–271 (FHGFCAVSSVLSVAMFLVGMF) form a helical membrane-spanning segment. Residues 272-300 (LRESTATFSQDDDGKADGGMDPNEYGWGQ) are Cytoplasmic-facing. A helical transmembrane segment spans residues 301-321 (MLWPLFMGAVTAGTLQLTGIN). At 322–337 (AVMNYAPKITENLGMD) the chain is on the extracellular side.

It belongs to the major facilitator superfamily. Sugar transporter (TC 2.A.1.1) family.

The protein resides in the membrane. Functionally, facilitative glucose transporter. This is Glucose transporter 2C (THT2C) from Trypanosoma brucei brucei.